A 309-amino-acid chain; its full sequence is Zinc finger CCCH domain-containing protein 31 (309 aa).

Residues 1-36 (MEGAGAARKRSRPDTANGGAAGGKRSRETESFQTGL) form a disordered region. 2 consecutive C3H1-type zinc fingers follow at residues 37–65 (SSKL…HFVP) and 103–131 (SGKT…HGER). The interval 86-106 (ARAPMDHAAGGNSHPASSGKT) is disordered. Residues 175–239 (SATAKISVDA…DQIKQASNMV (65 aa)) enclose the KH domain. A disordered region spans residues 249–273 (STPAKKPAGSAAGAAPAGRGGPGGR). Low complexity predominate over residues 251 to 265 (PAKKPAGSAAGAAPA). The C3H1-type 3 zinc-finger motif lies at 275–302 (NYKTKLCENFVKGTCTFGDRCHFAHGEN).

The protein is Zinc finger CCCH domain-containing protein 31 of Oryza sativa subsp. japonica (Rice).